Consider the following 230-residue polypeptide: Homeobox protein Hox-B5 (230 aa).

The interval 1 to 135 (GGGGGNVSGS…GAAGTDGQSP (135 aa)) is disordered. Polar residues predominate over residues 49–65 (FPGQESSRFRANQNCPL). Positions 87–103 (ATSSAHFTETEETSASS) are enriched in low complexity. Residues 137–142 (IFPWMR) carry the Antp-type hexapeptide motif. A DNA-binding region (homeobox) is located at residues 155–214 (GKRARTAYTRYQTLELEKEFHFNRYLTRRRRIEIAHTLCLSERQIKIWFQNRRMKWKKDN).

It belongs to the Antp homeobox family.

The protein localises to the nucleus. Its function is as follows. Sequence-specific transcription factor which is part of a developmental regulatory system that provides cells with specific positional identities on the anterior-posterior axis. The polypeptide is Homeobox protein Hox-B5 (hoxb5) (Xenopus laevis (African clawed frog)).